Reading from the N-terminus, the 389-residue chain is F-box protein At3g19880 (389 aa).

Residues 2–49 (TMMSDLTQDLVEEILSRVPITSLGAVRSTCKGWNALSKERILCIGEPK) enclose the F-box domain.

This Arabidopsis thaliana (Mouse-ear cress) protein is F-box protein At3g19880.